A 335-amino-acid polypeptide reads, in one-letter code: DNA-directed RNA polymerase subunit alpha (335 aa).

An alpha N-terminal domain (alpha-NTD) region spans residues 1-231 (MVREKITVST…DLLIPFLHTK (231 aa)). The segment at 263–335 (KKMALKSIFI…FVIDLPKNKF (73 aa)) is alpha C-terminal domain (alpha-CTD).

It belongs to the RNA polymerase alpha chain family. As to quaternary structure, in plastids the minimal PEP RNA polymerase catalytic core is composed of four subunits: alpha, beta, beta', and beta''. When a (nuclear-encoded) sigma factor is associated with the core the holoenzyme is formed, which can initiate transcription.

It is found in the plastid. The protein localises to the chloroplast. It carries out the reaction RNA(n) + a ribonucleoside 5'-triphosphate = RNA(n+1) + diphosphate. In terms of biological role, DNA-dependent RNA polymerase catalyzes the transcription of DNA into RNA using the four ribonucleoside triphosphates as substrates. This chain is DNA-directed RNA polymerase subunit alpha, found in Lactuca sativa (Garden lettuce).